The primary structure comprises 175 residues: Sec-independent protein translocase protein TatB (175 aa).

Residues 1–21 (MLDLGLSKMALIGVVALVVLG) traverse the membrane as a helical segment. Positions 155–175 (SGAARVARHQPASLRRPTRFF) are disordered.

Belongs to the TatB family. The Tat system comprises two distinct complexes: a TatABC complex, containing multiple copies of TatA, TatB and TatC subunits, and a separate TatA complex, containing only TatA subunits. Substrates initially bind to the TatABC complex, which probably triggers association of the separate TatA complex to form the active translocon.

It localises to the cell inner membrane. Its function is as follows. Part of the twin-arginine translocation (Tat) system that transports large folded proteins containing a characteristic twin-arginine motif in their signal peptide across membranes. Together with TatC, TatB is part of a receptor directly interacting with Tat signal peptides. TatB may form an oligomeric binding site that transiently accommodates folded Tat precursor proteins before their translocation. This Burkholderia lata (strain ATCC 17760 / DSM 23089 / LMG 22485 / NCIMB 9086 / R18194 / 383) protein is Sec-independent protein translocase protein TatB.